The chain runs to 784 residues: Toll-like receptor 2 (784 aa).

Positions 1-20 are cleaved as a signal peptide; that stretch reads MPRALWTAWVWAVIILSTEG. The Extracellular segment spans residues 21 to 587; the sequence is ASDQASSLSC…ARLSLSECHR (567 aa). Cysteines 30 and 36 form a disulfide. 19 LRR repeats span residues 54 to 77, 78 to 101, 102 to 125, 126 to 150, 151 to 175, 176 to 199, 200 to 223, 224 to 250, 251 to 278, 279 to 308, 309 to 337, 338 to 361, 362 to 388, 389 to 414, 415 to 437, 438 to 457, 458 to 478, 479 to 500, and 501 to 524; these read VKSLDLSNNDITYVGNRDLQRCVN, LKTLRLGANEIHTVEEDSFFHLRN, LEYLDLSYNRLSNLSSSWFRSLYV, LKFLNLLGNLYKTLGETSLFSHLPN, LRTLKVGNSNSFTEIHEKDFTGLTF, LEELEISAQNLQIYVPKSLKSIQN, ISHLILHLKQPILLVDILVDIVSS, LDCFELRDTNLHTFHFSEASISEMSTS, VKKLIFRNVQFTDESFVEVVKLFNYVSG, ILEVEFDDCTHDGIGDFRALSLDRIRHLGN, VETLTIRKLHIPQFFLFHDLSSIYPLTGR, VKRVTIENSKVFLVPCLLSQHLKS, LEYLDLSENLMSEETLKNSACKDAWPF, LQTLVLRQNRLKSLEKTGELLLTLEN, LNNLDISKNNFLSMPETCQWPGK, MKQLNLSSTRIHSLTQCLPQ, TLEILDVSNNNLDSFSLILPQ, LKELYISRNKLKTLPDASFLPV, and LSVMRISRNIINTFSKEQLDSFQQ. Asn114 carries N-linked (GlcNAc...) asparagine glycosylation. An N-linked (GlcNAc...) asparagine glycan is attached at Asn199. Cys353 and Cys382 are joined by a disulfide. Cys432 and Cys454 are joined by a disulfide. Asn442 is a glycosylation site (N-linked (GlcNAc...) asparagine). The region spanning 525 to 579 is the LRRCT domain; that stretch reads LKTLEAGGNNFICSCDFLSFTQGQQALGRVLVDWPDDYRCDSPSHVRGQRVQDAR. The helical transmembrane segment at 588-608 threads the bilayer; that stretch reads AAVVSAACCALFLLLLLTGVL. At 609–784 the chain is on the cytoplasmic side; that stretch reads CHRFHGLWYM…WLNLRAAIRS (176 aa). The TIR domain maps to 639 to 782; the sequence is ICYDAFVSYS…GFWLNLRAAI (144 aa). Lys754 participates in a covalent cross-link: Glycyl lysine isopeptide (Lys-Gly) (interchain with G-Cter in ubiquitin). The ATG16L1-binding motif signature appears at 761–778; sequence YLEWPVDETQQEGFWLNL.

Belongs to the Toll-like receptor family. As to quaternary structure, interacts with LY96, TLR1 and TLR6 (via extracellular domain). TLR2 seems to exist in heterodimers with either TLR1 or TLR6 before stimulation by the ligand. The heterodimers form bigger oligomers in response to their corresponding ligands as well as further heterotypic associations with other receptors such as CD14 and/or CD36. Binds MYD88 (via TIR domain). Interacts with TICAM1. Interacts with CNPY3. Interacts with ATG16L1. Interacts with PPP1R11. Interacts with TICAM2. Interacts with TIRAP. Ubiquitinated at Lys-754 by PPP1R11, leading to its degradation. Deubiquitinated by USP2. In terms of processing, glycosylation of Asn-442 is critical for secretion of the N-terminal ectodomain of TLR2.

It is found in the membrane. The protein resides in the cytoplasmic vesicle. The protein localises to the phagosome membrane. Its subcellular location is the membrane raft. In terms of biological role, cooperates with LY96 to mediate the innate immune response to bacterial lipoproteins and other microbial cell wall components. Cooperates with TLR1 or TLR6 to mediate the innate immune response to bacterial lipoproteins or lipopeptides. Acts via MYD88 and TRAF6, leading to NF-kappa-B activation, cytokine secretion and the inflammatory response. May also promote apoptosis in response to lipoproteins. Forms activation clusters composed of several receptors depending on the ligand, these clusters trigger signaling from the cell surface and subsequently are targeted to the Golgi in a lipid-raft dependent pathway. Forms the cluster TLR2:TLR6:CD14:CD36 in response to diacylated lipopeptides and TLR2:TLR1:CD14 in response to triacylated lipopeptides. This Bos taurus (Bovine) protein is Toll-like receptor 2 (TLR2).